We begin with the raw amino-acid sequence, 194 residues long: Adenylate kinase (194 aa).

Gly11–Thr16 lines the ATP pocket. Positions Ser31–Val60 are NMP. AMP contacts are provided by residues Thr32, Arg37, His58–Val60, Gly86–Arg89, and Gln93. The segment at Asn127–Asp137 is LID. Position 128 (Arg128) interacts with ATP. AMP contacts are provided by Arg134 and Arg145. Gly173 serves as a coordination point for ATP.

Belongs to the adenylate kinase family. Monomer.

It localises to the cytoplasm. It catalyses the reaction AMP + ATP = 2 ADP. It participates in purine metabolism; AMP biosynthesis via salvage pathway; AMP from ADP: step 1/1. Catalyzes the reversible transfer of the terminal phosphate group between ATP and AMP. Plays an important role in cellular energy homeostasis and in adenine nucleotide metabolism. The polypeptide is Adenylate kinase (Porphyromonas gingivalis (strain ATCC 33277 / DSM 20709 / CIP 103683 / JCM 12257 / NCTC 11834 / 2561)).